The following is a 30-amino-acid chain: rRNA N-glycosylase (30 aa).

This sequence belongs to the ribosome-inactivating protein family. Type 1 RIP subfamily. As to expression, expressed in seeds.

It carries out the reaction Endohydrolysis of the N-glycosidic bond at one specific adenosine on the 28S rRNA.. In terms of biological role, exhibits N-glycosylase activity. Catalyzes the release of one adenine from a ribosome. Acts as a ribosome-inactivating protein and inhibits protein synthesis in a rabbit-reticulocyte lysate system and in various cell lines (in vitro). This is rRNA N-glycosylase from Saponaria ocymoides (Rock soapwort).